The primary structure comprises 142 residues: MKTYSAKPESVKRDWYVVDASGKTLGRLATEVASRLRGKHKPEFTPHVDTGDYIVVINADKVAVTGKKASDKMYYRHTGYPGGLKEANFATLQAEKPEMIIEKAIKGMLPRNPLGRAMFRKLKVYAGTEHPHTAQQPQQLEI.

The protein belongs to the universal ribosomal protein uL13 family. In terms of assembly, part of the 50S ribosomal subunit.

In terms of biological role, this protein is one of the early assembly proteins of the 50S ribosomal subunit, although it is not seen to bind rRNA by itself. It is important during the early stages of 50S assembly. The polypeptide is Large ribosomal subunit protein uL13 (Alcanivorax borkumensis (strain ATCC 700651 / DSM 11573 / NCIMB 13689 / SK2)).